Consider the following 342-residue polypeptide: Ketoreductase nvfG (342 aa).

Belongs to the NAD(P)-dependent epimerase/dehydratase family. Dihydroflavonol-4-reductase subfamily.

It participates in secondary metabolite biosynthesis; terpenoid biosynthesis. In terms of biological role, ketoreductase; part of the gene cluster that mediates the biosynthesis of novofumigatonin, a heavily oxygenated meroterpenoid containing a unique orthoester moiety. The first step of the pathway is the synthesis of 3,5-dimethylorsellinic acid (DMOA) by the polyketide synthase nvfA via condensation of one acetyl-CoA starter unit with 3 malonyl-CoA units and 2 methylations. DMOA is then converted to farnesyl-DMOA by the farnesyltransferase nvfB. Epoxydation by FAD-dependent monooxygenase nvfK, followed by a protonation-initiated cyclization catalyzed by the terpene cyclase nvfL leads to the production of asnavolin H. The short chain dehydrogenase nvfC then as a 3-OH dehydrogenase of asnovolin H to yield chemesin D. There are two branches to synthesize asnovolin A from chemesin D. In one branch, chemesin D undergoes Baeyer-Villiger oxidation by nvfH, methylation by nvfJ, and enoyl reduction by the nvfM D enoylreductase that reduces the double bond between C-5'and C-6', to form respectively asnovolin I, asnovolin K, and asnovolin A. In the other branch, the methylation precedes the Baeyer-Villiger oxidation and the enoyl reduction to yield asnovolin A via the asnovolin J intermediate. Asnovolin A is further converted to fumigatonoid A by the Fe(II)/2-oxoglutarate-dependent dioxygenase nvfI that catalyzes an endoperoxidation reaction. The alpha/beta hydrolase nvfD then acts as an epimerase that converts fumigatonoid A to its C-5' epimer, which then undergoes spontaneous or nvfD-catalyzed lactonization. The following step utilizes the ketoreductase nvfG to produce fumigatonoid B. The dioxygenase nvfE further converts fumigatonoid B into fumigatonoid C. Finally the Fe(II)/2-oxoglutarate-dependent dioxygenase nvfF catalyzes two rounds of oxidation to transform fumigatonoid C into the end product, novofumigatonin A. In Aspergillus novofumigatus (strain IBT 16806), this protein is Ketoreductase nvfG.